The primary structure comprises 226 residues: Lipoprotein-releasing system ATP-binding protein LolD (226 aa).

Positions 6 to 226 constitute an ABC transporter domain; it reads IELKSVERHY…TLADGKVVPL (221 aa). ATP is bound at residue 42–49; the sequence is APSGTGKS.

The protein belongs to the ABC transporter superfamily. Lipoprotein translocase (TC 3.A.1.125) family. The complex is composed of two ATP-binding proteins (LolD) and two transmembrane proteins (LolC and LolE).

It localises to the cell inner membrane. Part of the ABC transporter complex LolCDE involved in the translocation of mature outer membrane-directed lipoproteins, from the inner membrane to the periplasmic chaperone, LolA. Responsible for the formation of the LolA-lipoprotein complex in an ATP-dependent manner. This chain is Lipoprotein-releasing system ATP-binding protein LolD, found in Mesorhizobium japonicum (strain LMG 29417 / CECT 9101 / MAFF 303099) (Mesorhizobium loti (strain MAFF 303099)).